A 252-amino-acid polypeptide reads, in one-letter code: Imidazole glycerol phosphate synthase subunit HisF (252 aa).

Residues Asp11 and Asp130 contribute to the active site.

This sequence belongs to the HisA/HisF family. As to quaternary structure, heterodimer of HisH and HisF.

The protein resides in the cytoplasm. It catalyses the reaction 5-[(5-phospho-1-deoxy-D-ribulos-1-ylimino)methylamino]-1-(5-phospho-beta-D-ribosyl)imidazole-4-carboxamide + L-glutamine = D-erythro-1-(imidazol-4-yl)glycerol 3-phosphate + 5-amino-1-(5-phospho-beta-D-ribosyl)imidazole-4-carboxamide + L-glutamate + H(+). The protein operates within amino-acid biosynthesis; L-histidine biosynthesis; L-histidine from 5-phospho-alpha-D-ribose 1-diphosphate: step 5/9. Functionally, IGPS catalyzes the conversion of PRFAR and glutamine to IGP, AICAR and glutamate. The HisF subunit catalyzes the cyclization activity that produces IGP and AICAR from PRFAR using the ammonia provided by the HisH subunit. In Acinetobacter baumannii (strain AB307-0294), this protein is Imidazole glycerol phosphate synthase subunit HisF.